Reading from the N-terminus, the 29-residue chain is Pyridoxal 5'-phosphate synthase subunit PdxS (29 aa).

The protein belongs to the PdxS/SNZ family. As to quaternary structure, in the presence of PdxT, forms a dodecamer of heterodimers.

The enzyme catalyses aldehydo-D-ribose 5-phosphate + D-glyceraldehyde 3-phosphate + L-glutamine = pyridoxal 5'-phosphate + L-glutamate + phosphate + 3 H2O + H(+). It functions in the pathway cofactor biosynthesis; pyridoxal 5'-phosphate biosynthesis. Catalyzes the formation of pyridoxal 5'-phosphate from ribose 5-phosphate (RBP), glyceraldehyde 3-phosphate (G3P) and ammonia. The ammonia is provided by the PdxT subunit. Can also use ribulose 5-phosphate and dihydroxyacetone phosphate as substrates, resulting from enzyme-catalyzed isomerization of RBP and G3P, respectively. In Clostridium pasteurianum, this protein is Pyridoxal 5'-phosphate synthase subunit PdxS.